Here is a 330-residue protein sequence, read N- to C-terminus: MYPEYQNIFTQVQVRGTPEMGMDDAGNNMMEERVGKPFFSTLAGLFGNGQIGPYYFGWTSIVAFGTGIAWFVIVGFNMLAQVGWSIPQFIRQLFWLALEPPSPEYGLSMPPLNDGGWYIIASFFLLVSVMTWLLRAYLLAEQHKMGKHIFWGFAAAVWLFLVLGLFRPILMGSWSEAVPYGIFPHLDWTTAFSIRYGNLYYNPFHCLSIVFLYGSVLLFCMHGGTILAVTRYGGDRELEQIYDRGTATERAALFWRWTMGFNATMEGIHRWAWWFAVLTPITGGIGILLTGTVVDNWFIWAQEHHFAPMYDGSYGYEDYGSYEAFIGKEN.

3 helical membrane passes run 57–83 (GWTSIVAFGTGIAWFVIVGFNMLAQVG), 115–144 (GGWYIIASFFLLVSVMTWLLRAYLLAEQHK), and 147–172 (KHIFWGFAAAVWLFLVLGLFRPILMG). (7R,8Z)-bacteriochlorophyll b contacts are provided by histidine 185 and histidine 205. A helical membrane pass occupies residues 202–230 (NPFHCLSIVFLYGSVLLFCMHGGTILAVT). Residues histidine 222 and glutamate 237 each contribute to the Fe cation site. Tryptophan 255 lines the a ubiquinone pocket. Residues 264 to 290 (TMEGIHRWAWWFAVLTPITGGIGILLT) traverse the membrane as a helical segment. Histidine 269 lines the Fe cation pocket.

It belongs to the reaction center PufL/M/PsbA/D family. Reaction center is composed of four bacteriochlorophylls, two bacteriopheophytins, two ubiquinones, one iron, and two highly hydrophobic polypeptide chains (designated L and M).

The protein localises to the cellular chromatophore membrane. The reaction center is a membrane-bound complex that mediates the initial photochemical event in the electron transfer process of photosynthesis. The sequence is that of Reaction center protein M chain (pufM) from Roseobacter denitrificans (strain ATCC 33942 / OCh 114) (Erythrobacter sp. (strain OCh 114)).